Reading from the N-terminus, the 434-residue chain is Arrestin domain-containing protein 1 (434 aa).

The disordered stretch occupies residues 292 to 349; the sequence is SPCPGRESSPGTLSLVVPSAPPQEEAEAVASGPHFSDPVSLSTKSHSQQQPLSAPLGS. Polar residues predominate over residues 330–343; that stretch reads VSLSTKSHSQQQPL. 2 consecutive short sequence motifs (PPxY motif) follow at residues 401 to 404 and 414 to 417; these read PPEY and PPSY.

This sequence belongs to the arrestin family. In terms of assembly, interacts (via PPxY motifs) with ITCH (via WW domains); the interaction is direct and participates in the recruitment of the ubiquitin-protein ligase ITCH to the NOTCH1 receptor. Interacts with ARRB1 and ARRB2; the interaction is direct. Interacts with TSG101; may recruit TSG101 to the plasma membrane. Interacts (via PPxY motifs) with WWP2 (via WW domains); ubiquitinates ARRDC1. Interacts with SLC11A2; controls the incorporation of SLC11A2 into extracellular vesicles through an ubiquitination-dependent mechanism. Interacts with WWP1 (via WW domains). Interacts with NEDD4 (via WW domains). Interacts with PDCD6IP. In terms of processing, ubiquitinated. Ubiquitination by WWP2; promotes localization to extracellular microvesicles. Ubiquitinated by WWP1.

The protein localises to the cell membrane. In terms of biological role, functions as an adapter recruiting ubiquitin-protein ligases to their specific substrates. Through an ubiquitination-dependent mechanism plays for instance a role in the incorporation of SLC11A2 into extracellular vesicles. More generally, plays a role in the extracellular transport of proteins between cells through the release in the extracellular space of microvesicles. By participating to the ITCH-mediated ubiquitination and subsequent degradation of NOTCH1, negatively regulates the NOTCH signaling pathway. The protein is Arrestin domain-containing protein 1 of Mus musculus (Mouse).